Consider the following 535-residue polypeptide: Dual specificity calcium/calmodulin-dependent 3',5'-cyclic nucleotide phosphodiesterase 1B (535 aa).

Positions M1 to E21 are disordered. Residues S7 and S14 each carry the phosphoserine modification. Calmodulin-binding regions lie at residues P26–E46 and E117–R140. Residues V145–G502 enclose the PDEase domain. H222 functions as the Proton donor in the catalytic mechanism. Residues H226, H262, D263, and D369 each coordinate Zn(2+). D263 contacts Mg(2+). Disordered stretches follow at residues P445 to N474 and W495 to D535. Over residues K454–Q463 the composition is skewed to polar residues. Phosphoserine occurs at positions 465 and 513.

This sequence belongs to the cyclic nucleotide phosphodiesterase family. PDE1 subfamily. In terms of assembly, homodimer. Requires Zn(2+) as cofactor. Mg(2+) is required as a cofactor.

The protein resides in the cytoplasm. It localises to the cytosol. The catalysed reaction is a nucleoside 3',5'-cyclic phosphate + H2O = a nucleoside 5'-phosphate + H(+). It catalyses the reaction 3',5'-cyclic GMP + H2O = GMP + H(+). It carries out the reaction 3',5'-cyclic AMP + H2O = AMP + H(+). Type I PDE are activated by the binding of calmodulin in the presence of Ca(2+). In terms of biological role, cyclic nucleotide phosphodiesterase with a dual specificity for the second messengers cAMP and cGMP, which are key regulators of many important physiological processes. Has a preference for cGMP as a substrate. This is Dual specificity calcium/calmodulin-dependent 3',5'-cyclic nucleotide phosphodiesterase 1B from Cricetulus griseus (Chinese hamster).